Reading from the N-terminus, the 318-residue chain is Protoheme IX farnesyltransferase (318 aa).

Helical transmembrane passes span Ile-27–Gly-47, Pro-52–Ile-72, Leu-103–Trp-123, Leu-124–Leu-144, Ile-152–Gly-172, Trp-179–Leu-199, Ile-225–Gly-245, Ile-248–Leu-268, and Ala-288–Ala-308.

The protein belongs to the UbiA prenyltransferase family. Protoheme IX farnesyltransferase subfamily. In terms of assembly, interacts with CtaA.

It localises to the cell inner membrane. The enzyme catalyses heme b + (2E,6E)-farnesyl diphosphate + H2O = Fe(II)-heme o + diphosphate. It functions in the pathway porphyrin-containing compound metabolism; heme O biosynthesis; heme O from protoheme: step 1/1. Converts heme B (protoheme IX) to heme O by substitution of the vinyl group on carbon 2 of heme B porphyrin ring with a hydroxyethyl farnesyl side group. The polypeptide is Protoheme IX farnesyltransferase (Hyphomonas neptunium (strain ATCC 15444)).